A 294-amino-acid chain; its full sequence is Lycopene elongase/hydratase (294 aa).

Helical transmembrane passes span 31-51 (FWLY…DGPG), 53-73 (LFSP…NVFL), 115-135 (LALL…LAWM), 160-180 (GLYI…APPA), 182-202 (AVVG…IPDI), 222-242 (TYYY…FTHW), 243-263 (VFGV…GVGV), and 274-294 (AINT…MLYG).

The protein belongs to the UbiA prenyltransferase family.

The protein localises to the cell membrane. It carries out the reaction all-trans-lycopene + dimethylallyl diphosphate + H2O = dihydroisopentenyldehydrorhodopin + diphosphate. It catalyses the reaction isopentenyldehydrorhodopin + dimethylallyl diphosphate + H2O = dihydrobisanhydrobacterioruberin + diphosphate. It functions in the pathway carotenoid biosynthesis. Involved in the biosynthesis of the acyclic C50 carotenoid bacterioruberin (BR). Acts as a bifunctional elongase/hydratase that catalyzes the elongation of lycopene by attaching a C(5) isoprene unit at C-2, as well as the hydroxylation of the previous end of the molecule. The enzyme acts at both ends of the substrate, and catalyzes the conversion of lycopene to the C(45) intermediate dihydroisopentenyldehydrorhodopin (DH-IDR) and the conversion of isopentenyldehydrorhodopin (IDR) to the C(50) carotenoid dihydrobisanhydrobacterioruberin (DH-BABR). Can also catalyze the conversion of lycopene to tetrahydrobisanhydrobacterioruberin (TH-BABR). This is Lycopene elongase/hydratase from Haloarcula japonica (strain ATCC 49778 / DSM 6131 / JCM 7785 / NBRC 101032 / NCIMB 13157 / TR-1).